The following is a 37-amino-acid chain: Large ribosomal subunit protein bL36 (37 aa).

This sequence belongs to the bacterial ribosomal protein bL36 family.

This chain is Large ribosomal subunit protein bL36, found in Thermosynechococcus vestitus (strain NIES-2133 / IAM M-273 / BP-1).